Here is a 339-residue protein sequence, read N- to C-terminus: Phenylalanine--tRNA ligase alpha subunit (339 aa).

Residue glutamate 254 coordinates Mg(2+).

The protein belongs to the class-II aminoacyl-tRNA synthetase family. Phe-tRNA synthetase alpha subunit type 1 subfamily. Tetramer of two alpha and two beta subunits. Requires Mg(2+) as cofactor.

The protein resides in the cytoplasm. The catalysed reaction is tRNA(Phe) + L-phenylalanine + ATP = L-phenylalanyl-tRNA(Phe) + AMP + diphosphate + H(+). In Clostridium novyi (strain NT), this protein is Phenylalanine--tRNA ligase alpha subunit.